Reading from the N-terminus, the 441-residue chain is Cysteine--tRNA ligase (441 aa).

Residue C24 coordinates Zn(2+). The short motif at 26–36 is the 'HIGH' region element; that stretch reads PTVYNYIHIGN. Residues C204, H230, and E234 each coordinate Zn(2+). A 'KMSKS' region motif is present at residues 262–266; that stretch reads KMSKS. K265 provides a ligand contact to ATP.

This sequence belongs to the class-I aminoacyl-tRNA synthetase family. Monomer. Requires Zn(2+) as cofactor.

Its subcellular location is the cytoplasm. It catalyses the reaction tRNA(Cys) + L-cysteine + ATP = L-cysteinyl-tRNA(Cys) + AMP + diphosphate. This chain is Cysteine--tRNA ligase, found in Mycoplasma capricolum subsp. capricolum (strain California kid / ATCC 27343 / NCTC 10154).